We begin with the raw amino-acid sequence, 425 residues long: UPF0761 membrane protein XCV0968 (425 aa).

Transmembrane regions (helical) follow at residues 48-68, 105-125, 154-174, 182-202, 216-236, and 250-270; these read VFAL…FPAF, FTVA…HSIE, GTML…LPLF, LAEF…IVLI, ALPG…GFGF, and ALSA…SVLL.

It belongs to the UPF0761 family.

The protein localises to the cell inner membrane. The polypeptide is UPF0761 membrane protein XCV0968 (Xanthomonas euvesicatoria pv. vesicatoria (strain 85-10) (Xanthomonas campestris pv. vesicatoria)).